Consider the following 732-residue polypeptide: Interleukin-31 receptor subunit alpha (732 aa).

Positions 1–19 (MMWTWALWMLPSLCKFSLA) are cleaved as a signal peptide. The Extracellular portion of the chain corresponds to 20-519 (ALPAKPENIS…FKTLSFSVFE (500 aa)). Fibronectin type-III domains are found at residues 24–122 (KPEN…IAKT), 124–225 (PPKI…TEEE), 223–315 (EEEA…PVAT), 319–416 (PAIQ…QAYA), and 421–515 (PSEG…TLSF). N-linked (GlcNAc...) asparagine glycosylation is found at Asn-37, Asn-67, Asn-93, Asn-166, Asn-187, Asn-277, Asn-283, Asn-395, Asn-455, and Asn-504. The helical transmembrane segment at 520-540 (IILITSLIGGGLLILIILTVA) threads the bilayer. Topologically, residues 541 to 732 (YGLKKPNKLT…KLPEHTKGEV (192 aa)) are cytoplasmic.

Belongs to the type I cytokine receptor family. Type 2 subfamily. Heterodimer with OSMR. Interacts with JAK1 and STAT3. Post-translationally, N-glycosylated. Expressed in CD14- and CD56-positive blood cells. Expressed in macrophages. Expressed in keratinocytes. Expressed in a subset of dorsal root ganglia neurons (at protein level). Expressed at low levels in testis, ovary, brain, prostate, placenta, thymus, bone marrow, trachea and skin. Expressed in bronchial and alveolar epithelial cells and pulmonary fibroblasts. Detected in all of the myelomonocytic lineage. Isoform 6: Expressed at higher levels in lesional skin compared to healthy skin of atopic dermatitis patients.

It localises to the cell membrane. It is found in the presynaptic cell membrane. The protein resides in the cell projection. Its subcellular location is the axon. Associates with OSMR to form the interleukin-31 receptor which activates STAT3 and to a lower extent STAT1 and STAT5. May function in skin immunity. Mediates IL31-induced itch, probably in a manner dependent on cation channels TRPA1 and TRPV1. Positively regulates numbers and cycling status of immature subsets of myeloid progenitor cells in bone marrow in vivo and enhances myeloid progenitor cell survival in vitro. This is Interleukin-31 receptor subunit alpha (IL31RA) from Homo sapiens (Human).